Reading from the N-terminus, the 446-residue chain is tRNA-2-methylthio-N(6)-dimethylallyladenosine synthase (446 aa).

The 118-residue stretch at 2 to 119 (KKIYIKTFGC…LPELIAQRRE (118 aa)) folds into the MTTase N-terminal domain. Residues C11, C48, C82, C156, C160, and C163 each contribute to the [4Fe-4S] cluster site. One can recognise a Radical SAM core domain in the interval 142-376 (RVEGGAAFVS…RIEAQAQGVN (235 aa)). The TRAM domain occupies 377-440 (RSMVGSVQRV…PHSLRGEAVT (64 aa)).

It belongs to the methylthiotransferase family. MiaB subfamily. In terms of assembly, monomer. [4Fe-4S] cluster serves as cofactor.

The protein resides in the cytoplasm. The catalysed reaction is N(6)-dimethylallyladenosine(37) in tRNA + (sulfur carrier)-SH + AH2 + 2 S-adenosyl-L-methionine = 2-methylsulfanyl-N(6)-dimethylallyladenosine(37) in tRNA + (sulfur carrier)-H + 5'-deoxyadenosine + L-methionine + A + S-adenosyl-L-homocysteine + 2 H(+). Catalyzes the methylthiolation of N6-(dimethylallyl)adenosine (i(6)A), leading to the formation of 2-methylthio-N6-(dimethylallyl)adenosine (ms(2)i(6)A) at position 37 in tRNAs that read codons beginning with uridine. The polypeptide is tRNA-2-methylthio-N(6)-dimethylallyladenosine synthase (Thiobacillus denitrificans (strain ATCC 25259 / T1)).